The chain runs to 236 residues: DNA repair protein RecO (236 aa).

This sequence belongs to the RecO family.

Involved in DNA repair and RecF pathway recombination. In Rickettsia typhi (strain ATCC VR-144 / Wilmington), this protein is DNA repair protein RecO.